A 93-amino-acid polypeptide reads, in one-letter code: Large ribosomal subunit protein eL42 (93 aa).

Zn(2+) is bound by residues Cys-11, Cys-14, Cys-71, and Cys-74. The C4-type zinc finger occupies 11-74 (CRYCGKHTLH…VNIRFRCTEC (64 aa)).

This sequence belongs to the eukaryotic ribosomal protein eL42 family. As to quaternary structure, part of the 50S ribosomal subunit. It depends on Zn(2+) as a cofactor.

Binds to the 23S rRNA. The chain is Large ribosomal subunit protein eL42 from Archaeoglobus fulgidus (strain ATCC 49558 / DSM 4304 / JCM 9628 / NBRC 100126 / VC-16).